We begin with the raw amino-acid sequence, 491 residues long: Probable allantoate deiminase (491 aa).

Positions 1-32 (MALLLSYPRRHPSIHLLILSAYALFLLPILDG) are cleaved as a signal peptide. An N-linked (GlcNAc...) asparagine glycan is attached at asparagine 109. Positions 120, 131, 168, and 234 each coordinate Mn(2+). N-linked (GlcNAc...) asparagine glycans are attached at residues asparagine 265 and asparagine 343. Residue histidine 454 participates in Mn(2+) binding.

The protein belongs to the peptidase M20A family. In terms of assembly, homodimer. It depends on Mn(2+) as a cofactor.

It localises to the endoplasmic reticulum. It catalyses the reaction allantoate + H2O + 2 H(+) = (S)-2-ureidoglycine + NH4(+) + CO2. In terms of biological role, involved in the catabolism of purine nucleotides. The sequential activity of AAH, UGLYAH and UAH allows a complete purine breakdown without the intermediate generation of urea. This Oryza sativa subsp. japonica (Rice) protein is Probable allantoate deiminase.